A 329-amino-acid polypeptide reads, in one-letter code: Transcription factor TGA2.3 (329 aa).

Residues 1–48 (MADMSPRTDTSTDDTDDNHMLEPGQLALAAASDSDRSKDKHEDQKTLR) are disordered. Residues 33-46 (DSDRSKDKHEDQKT) are compositionally biased toward basic and acidic residues. One can recognise a bZIP domain in the interval 43–87 (DQKTLRRLAQNREAARKSRLRKKAYVQQLENSRLKLTQLEQELQR). The segment at 45-65 (KTLRRLAQNREAARKSRLRKK) is basic motif. The tract at residues 71 to 85 (LENSRLKLTQLEQEL) is leucine-zipper. The 217-residue stretch at 110-326 (ALAFDMEYAR…RALSSLWLAR (217 aa)) folds into the DOG1 domain.

This sequence belongs to the bZIP family. As to quaternary structure, interacts with NPR1/NH1 and NPR3/NH3.

Its subcellular location is the nucleus. In terms of biological role, transcriptional regulator involved in defense response. The sequence is that of Transcription factor TGA2.3 from Oryza sativa subsp. japonica (Rice).